The sequence spans 401 residues: Dynactin subunit 2 (401 aa).

The disordered stretch occupies residues 1-25; it reads MADPKYADLPGIARNEPDVYETSDL. Ala-2 bears the N-acetylalanine mark. Tyr-6 is subject to Phosphotyrosine. At Ser-83 the chain carries Phosphoserine. Tyr-86 carries the post-translational modification Phosphotyrosine. The stretch at 99–132 forms a coiled coil; the sequence is PQQKYQRLLHEVQELTTEVEKIKTTVKESATEEK. A phosphothreonine mark is found at Thr-134 and Thr-198. Residues 214–244 adopt a coiled-coil conformation; sequence EQDKFSQAAKVAELEKRLTELETAVRCDQDA. Position 320 is a phosphoserine (Ser-320). A coiled-coil region spans residues 379 to 399; it reads RENLATVEGNFASIDERMKKL.

It belongs to the dynactin subunit 2 family. As to quaternary structure, subunit of dynactin, a multiprotein complex part of a tripartite complex with dynein and a adapter, such as BICDL1, BICD2 or HOOK3. The dynactin complex is built around ACTR1A/ACTB filament and consists of an actin-related filament composed of a shoulder domain, a pointed end and a barbed end. Its length is defined by its flexible shoulder domain. The soulder is composed of 2 DCTN1 subunits, 4 DCTN2 and 2 DCTN3. The 4 DCNT2 (via N-terminus) bind the ACTR1A filament and act as molecular rulers to determine the length. The pointed end is important for binding dynein-dynactin cargo adapters and consists of 4 subunits: ACTR10, DCNT4, DCTN5 and DCTN6. The barbed end is composed of a CAPZA1:CAPZB heterodimers, which binds ACTR1A/ACTB filament and dynactin and stabilizes dynactin. Interacts with BICD2 and CEP135. Interacts with DYNAP. Interacts with ECPAS. Interacts with MAPRE1.

Its subcellular location is the cytoplasm. The protein localises to the cytoskeleton. The protein resides in the microtubule organizing center. It localises to the centrosome. It is found in the membrane. Part of the dynactin complex that activates the molecular motor dynein for ultra-processive transport along microtubules. In the dynactin soulder domain, binds the ACTR1A filament and acts as a molecular ruler to determine the length. Modulates cytoplasmic dynein binding to an organelle, and plays a role in prometaphase chromosome alignment and spindle organization during mitosis. Involved in anchoring microtubules to centrosomes. May play a role in synapse formation during brain development. This is Dynactin subunit 2 from Homo sapiens (Human).